Reading from the N-terminus, the 505-residue chain is MVSIRPDEISSIIRQQIEQYDQEIQVSNVGTVLQVGDGIARVYGLDKVMSGELLEFEDGTIGIALNLEADNVGVVLMGDGRNILEGSSVRATQKIAQVPVGDAVIGRVVDALARPIDGKGDIATTDTRLIESSAPGIISRKFVYEPLQTGITAIDAMIPIPRGQRELIIGDRQTGKTAVAIDTILNQKGQGVVCVYVAIGQKASSVAQVVGVLQEKGALDYTVIVAANADDPATLQYLAPYTGASIAEYFMYKGQHTLVIYDDLSKQAQAYRQMSLLLRRPPGREAYPGDVFYLHSRLLERAAKLSPQLGEGSMTALPIVETQAGDVCAYIPTNVISITDGQIFLSADLFNSGLRPAINVGISVSRVGSAAQIKAMKQVAGKLKLELAQFDELKAFSQFSSDLDKATQLQLARGERLRELLKQQQYAPLPVEEQVAVIYTGINGFLDNIETKQVSAFISNLRENLSVKRAKFGEIIRSEKALTAEAENLLKDAISDCKQAFLSNI.

Residue 170 to 177 (GDRQTGKT) participates in ATP binding.

This sequence belongs to the ATPase alpha/beta chains family. F-type ATPases have 2 components, CF(1) - the catalytic core - and CF(0) - the membrane proton channel. CF(1) has five subunits: alpha(3), beta(3), gamma(1), delta(1), epsilon(1). CF(0) has four main subunits: a, b, b' and c.

The protein resides in the plastid. The protein localises to the cyanelle thylakoid membrane. It catalyses the reaction ATP + H2O + 4 H(+)(in) = ADP + phosphate + 5 H(+)(out). Functionally, produces ATP from ADP in the presence of a proton gradient across the membrane. The alpha chain is a regulatory subunit. This chain is ATP synthase subunit alpha, cyanelle, found in Cyanophora paradoxa.